The sequence spans 1361 residues: uncharacterized protein (1361 aa).

The protein belongs to the IIV-6 261R/396L/443R family.

This is an uncharacterized protein from Invertebrate iridescent virus 6 (IIV-6).